The chain runs to 615 residues: MPIQVLPPQLANQIAAGEVVERPASVVKELVENSLDAGATRIDIDIERGGAKLIRIRDNGCGIKKDELALALARHATSKIASLDDLEAIISLGFRGEALASISSVSRLTLTSRTAEQQEAWQAYAEGRDMDVTVKPAAHPVGTTLEVLDLFYNTPARRKFLRTEKTEFNHIDEIIRRIALARFDVTINLSHNGKIVRQYRAVPEGGQKERRLGAICGTAFLEQALAIEWQHGDLTLRGWVADPNHTTPALAEIQYCYVNGRMMRDRLINHAIRQACEDKLGADQQPAFVLYLEIDPHQVDVNVHPAKHEVRFHQSRLVHDFIYQGVLSVLQQQLETPLPLDDEPQPAPRAIPENRVAAGRNHFAEPAVREPVAPRYSPAPASGSRPAAPWPNAQPGYQKQQGEVYRQLLQTPAPMQKPKAPEPQEPALAANSQSFGRVLTIVHSDCALLERDGNISLLSLPVAERWLRQAQLTPGEVPVCAQPLLIPLRLKVSGEEKSALEKAQSALAELGIDFQSDAQHVTIRAVPLPLRQQNLQILIPELIGYLAKQSVFEPGNIAQWIARNLMSEHAQWSMAQAITLLADVERLCPQLVKTPPGGLLQSVDLHPAIKALKDE.

The interval 362 to 397 is disordered; that stretch reads HFAEPAVREPVAPRYSPAPASGSRPAAPWPNAQPGY. Residues 373 to 387 show a composition bias toward low complexity; it reads APRYSPAPASGSRPA.

It belongs to the DNA mismatch repair MutL/HexB family.

This protein is involved in the repair of mismatches in DNA. It is required for dam-dependent methyl-directed DNA mismatch repair. May act as a 'molecular matchmaker', a protein that promotes the formation of a stable complex between two or more DNA-binding proteins in an ATP-dependent manner without itself being part of a final effector complex. The sequence is that of DNA mismatch repair protein MutL from Escherichia coli O81 (strain ED1a).